The primary structure comprises 394 residues: Phosphopentomutase (394 aa).

Mn(2+)-binding residues include aspartate 15, aspartate 288, histidine 293, aspartate 329, histidine 330, and histidine 341.

The protein belongs to the phosphopentomutase family. It depends on Mn(2+) as a cofactor.

It localises to the cytoplasm. The enzyme catalyses 2-deoxy-alpha-D-ribose 1-phosphate = 2-deoxy-D-ribose 5-phosphate. It carries out the reaction alpha-D-ribose 1-phosphate = D-ribose 5-phosphate. It participates in carbohydrate degradation; 2-deoxy-D-ribose 1-phosphate degradation; D-glyceraldehyde 3-phosphate and acetaldehyde from 2-deoxy-alpha-D-ribose 1-phosphate: step 1/2. Its function is as follows. Isomerase that catalyzes the conversion of deoxy-ribose 1-phosphate (dRib-1-P) and ribose 1-phosphate (Rib-1-P) to deoxy-ribose 5-phosphate (dRib-5-P) and ribose 5-phosphate (Rib-5-P), respectively. This chain is Phosphopentomutase, found in Bacillus licheniformis (strain ATCC 14580 / DSM 13 / JCM 2505 / CCUG 7422 / NBRC 12200 / NCIMB 9375 / NCTC 10341 / NRRL NRS-1264 / Gibson 46).